An 849-amino-acid polypeptide reads, in one-letter code: Membrane protein-large ribosomal subunit bL9 fusion protein (849 aa).

Residues methionine 1 to threonine 680 form a unknown region. The next 2 helical transmembrane spans lie at phenylalanine 11–glutamine 31 and isoleucine 64–phenylalanine 84. The GGDEF domain occupies lysine 214–glutamate 342. Positions valine 681 to lysine 849 are large ribosomal subunit protein bL9.

Belongs to the bacterial ribosomal protein bL9 family.

The protein resides in the cell membrane. Its function is as follows. Binds to the 23S rRNA. The sequence is that of Membrane protein-large ribosomal subunit bL9 fusion protein from Onion yellows phytoplasma (strain OY-M).